Consider the following 833-residue polypeptide: Piwi-like protein 2 (833 aa).

A PAZ domain is found at 227–353; sequence RINRVLNDNS…IPGELCFLCG (127 aa). The interval 313–338 is disordered; the sequence is PMRRERKKKDEEGVEKEKEKEAPEEK. Basic and acidic residues predominate over residues 320–338; that stretch reads KKDEEGVEKEKEKEAPEEK. Residues 515 to 815 enclose the Piwi domain; sequence KMALVFVPDD…LAELVGKVHK (301 aa).

It belongs to the argonaute family. Piwi subfamily. In terms of tissue distribution, expressed in dividing adult stem cells.

Functionally, required for the production of functional progeny from adult somatic stem cells (neoblasts). The protein is Piwi-like protein 2 (wi-2) of Schmidtea mediterranea (Freshwater planarian flatworm).